Reading from the N-terminus, the 189-residue chain is uncharacterized protein (189 aa).

Helical transmembrane passes span 35-55 (IIWYGVSIAVIVILADMAVMK), 97-117 (GVLQTHIGLWTASLIFAALHF), 123-143 (WLLFIMVTAISFLLGLMYEWT), and 144-164 (GNLFVPMTAHFIIDAVFACQI).

The protein resides in the cell membrane. This is an uncharacterized protein from Bacillus subtilis (strain 168).